Reading from the N-terminus, the 202-residue chain is MKNENNISLPQYVTLNIQTLNSSEDKTIRIKAKTLNFPLSSEDLRDISILEKKYDQEENCAGLAAPQIGISKCIIIFAVHEDAELKKWHPDLKDTMPKTIWINPSYKPIGIDKHEDYEGCFSVENATGPVARFKKIHYHAYDINGNQIQGIAEGFLARVIQHEIDHLNGKVFLDYVAPKKIMTKEEYLEMRKKAMEQENIKS.

Residues C120 and H162 each contribute to the Fe cation site. E163 is a catalytic residue. H166 is a binding site for Fe cation.

This sequence belongs to the polypeptide deformylase family. It depends on Fe(2+) as a cofactor.

It carries out the reaction N-terminal N-formyl-L-methionyl-[peptide] + H2O = N-terminal L-methionyl-[peptide] + formate. In terms of biological role, removes the formyl group from the N-terminal Met of newly synthesized proteins. Requires at least a dipeptide for an efficient rate of reaction. N-terminal L-methionine is a prerequisite for activity but the enzyme has broad specificity at other positions. This Rickettsia conorii (strain ATCC VR-613 / Malish 7) protein is Peptide deformylase 2.